A 156-amino-acid chain; its full sequence is Small ribosomal subunit protein uS7 (156 aa).

Belongs to the universal ribosomal protein uS7 family. As to quaternary structure, part of the 30S ribosomal subunit. Contacts proteins S9 and S11.

Functionally, one of the primary rRNA binding proteins, it binds directly to 16S rRNA where it nucleates assembly of the head domain of the 30S subunit. Is located at the subunit interface close to the decoding center, probably blocks exit of the E-site tRNA. The chain is Small ribosomal subunit protein uS7 from Shewanella amazonensis (strain ATCC BAA-1098 / SB2B).